A 438-amino-acid polypeptide reads, in one-letter code: Transmembrane protein 184C (438 aa).

7 consecutive transmembrane segments (helical) span residues Leu-17–Leu-37, Ala-48–Leu-68, Ile-86–Ile-106, Val-176–Leu-196, Tyr-212–Tyr-232, Val-254–Ile-274, and Ala-287–Ala-307. A disordered region spans residues Pro-358–Ser-438. Low complexity-rich tracts occupy residues Ser-374–Val-390 and Thr-404–Thr-413. Basic and acidic residues predominate over residues Gly-426–Ser-438.

The protein belongs to the TMEM184 family.

It localises to the membrane. Possible tumor suppressor which may play a role in cell growth. This is Transmembrane protein 184C (TMEM184C) from Bos taurus (Bovine).